The primary structure comprises 592 residues: Frizzled-5 (592 aa).

The N-terminal stretch at 1–38 (MRKPADEHHFTMETSGMHLVGFWLHVLLLFQLSGLGDS) is a signal peptide. At 39-248 (ASKDIVCEPI…QDERTFTTFW (210 aa)) the chain is on the extracellular side. Residues 40-161 (SKDIVCEPIT…GDTDRLCMDR (122 aa)) enclose the FZ domain. Disulfide bonds link cysteine 45–cysteine 106, cysteine 53–cysteine 99, cysteine 90–cysteine 128, cysteine 117–cysteine 158, and cysteine 121–cysteine 145. A disordered region spans residues 162 to 192 (NSSETTTLSPPFPKPTPKGTPRHRATAKSAP). A helical membrane pass occupies residues 249–269 (IGLWSVLCFVSTFTTVATFLI). The Cytoplasmic segment spans residues 270 to 280 (DMERFKYPERP). Residues 281–301 (IIFLAACYLFVSLGYIVRLLA) form a helical membrane-spanning segment. The Extracellular segment spans residues 302 to 327 (GHERVACEGTGDQQHILYDTTGPALC). Residues 328–348 (TLVFLLIYFFGMASSIWWVVL) traverse the membrane as a helical segment. Over 349-370 (SFTWFLAAGMKWGNEAIAGYSQ) the chain is Cytoplasmic. The helical transmembrane segment at 371–391 (YFHLAAWLVPSVKSIAVLALS) threads the bilayer. The Extracellular portion of the chain corresponds to 392–414 (SVDGDPVAGICYVGNQSLEGLRG). Residues 415 to 435 (FVLAPLVVYLFTGSLFLLAGF) form a helical membrane-spanning segment. Topologically, residues 436 to 461 (VSLFRIRSVIKQGGTKTDKLEKLMIR) are cytoplasmic. A helical membrane pass occupies residues 462-482 (IGLFTVLYTVPATIVVACLVY). Over 483–512 (EQHYRPSWERALACSCPSERQRLGMGPDYA) the chain is Extracellular. A helical membrane pass occupies residues 513-533 (VFMLKYFMCLVVGITSGVWIW). Topologically, residues 534–592 (SGKTLESWRRFIARYVPCRTRKPPVSASSMYSEASTALTARAGTAPTGTYHKSAPSSHV) are cytoplasmic.

Belongs to the G-protein coupled receptor Fz/Smo family.

The protein resides in the cell membrane. It is found in the golgi apparatus membrane. The protein localises to the synapse. Its subcellular location is the perikaryon. It localises to the cell projection. The protein resides in the dendrite. It is found in the axon. In terms of biological role, receptor for Wnt proteins. Following binding, activates the canonical Wnt/beta-catenin signaling pathway. Also activates wnt non-canonical signaling. In neurons, activation of the Wnt pathway promotes formation of synapses. May be involved in transduction and intercellular transmission of polarity information during tissue morphogenesis and/or in differentiated tissues. Plays a role in early eye development, possibly through wnt non-canonical signaling. As a receptor for wnt11, promotes eye formation, at least partially, by antagonizing the Wnt/beta-catenin pathway. In addition, promotes coherence of eye field cells, potentially contributing to the coordinated morphogenetic behaviors of cells in the nascent eye field. The protein is Frizzled-5 (fzd5) of Danio rerio (Zebrafish).